A 39-amino-acid chain; its full sequence is Cytochrome b559 subunit beta (39 aa).

A helical transmembrane segment spans residues 14-30 (WLAVHGLAVPTVSFLGS). H18 contributes to the heme binding site.

This sequence belongs to the PsbE/PsbF family. Heterodimer of an alpha subunit and a beta subunit. PSII is composed of 1 copy each of membrane proteins PsbA, PsbB, PsbC, PsbD, PsbE, PsbF, PsbH, PsbI, PsbJ, PsbK, PsbL, PsbM, PsbT, PsbX, PsbY, PsbZ, Psb30/Ycf12, at least 3 peripheral proteins of the oxygen-evolving complex and a large number of cofactors. It forms dimeric complexes. Heme b serves as cofactor.

The protein resides in the plastid. Its subcellular location is the chloroplast thylakoid membrane. Its function is as follows. This b-type cytochrome is tightly associated with the reaction center of photosystem II (PSII). PSII is a light-driven water:plastoquinone oxidoreductase that uses light energy to abstract electrons from H(2)O, generating O(2) and a proton gradient subsequently used for ATP formation. It consists of a core antenna complex that captures photons, and an electron transfer chain that converts photonic excitation into a charge separation. The sequence is that of Cytochrome b559 subunit beta from Lotus japonicus (Lotus corniculatus var. japonicus).